Reading from the N-terminus, the 537-residue chain is Syncytin-2 (537 aa).

The N-terminal stretch at 1–15 (MGLLLLVLILTPLLA) is a signal peptide. The Extracellular segment spans residues 16–478 (AYRHPDFPLL…GWLNWEGTWK (463 aa)). The CXXC signature appears at 43–46 (CWLC). Intrachain disulfides connect C43–C46, C43–C439, and C431–C438. N-linked (GlcNAc...) asparagine glycosylation is found at N133, N146, N177, N220, N241, N247, N312, and N332. The interval 354 to 374 (FIPLLAGLGILAGTGTGIAGI) is fusion peptide. The short motif at 414-430 (LQNRRGLDMLTAAQGGI) is the CKS-17 element. The CX6CC signature appears at 431–439 (CLALDEKCC). The N-linked (GlcNAc...) asparagine glycan is linked to N443. A helical membrane pass occupies residues 479–499 (WFSWVLPFIGPLVSLLLLLLF). Topologically, residues 500–537 (GPCLLNLITQFVSSRLQAIKLQTNGAGCRPRNIQESPF) are cytoplasmic.

This sequence belongs to the gamma type-C retroviral envelope protein family. HERV class-I FRD env subfamily. As to quaternary structure, the surface and transmembrane proteins form a heterodimer. They are attached by non-covalent interactions or by a labile interchain disulfide bond. Post-translationally, specific enzymatic cleavages in vivo yield the mature SU and TM proteins. The CXXC motif is highly conserved across a broad range of retroviral envelope proteins. It is thought to participate in the formation of a labile disulfide bond possibly with the CX6CC motif present in the transmembrane protein.

It localises to the virion. Its subcellular location is the cell membrane. Its function is as follows. This endogenous retroviral envelope protein has retained its original fusogenic properties and participates in trophoblast fusion and the formation of a syncytium during placenta morphogenesis. The interaction with MFSD2A is apparently important for this process. In terms of biological role, endogenous envelope proteins may have kept, lost or modified their original function during evolution but this one can still make pseudotypes with MLV, HIV-1 or SIV-1 virions and confer infectivity. Retroviral envelope proteins mediate receptor recognition and membrane fusion during early infection. The surface protein mediates receptor recognition, while the transmembrane protein anchors the envelope heterodimer to the viral membrane through one transmembrane domain. The other hydrophobic domain, called fusion peptide, mediates fusion of the viral membrane with the target cell membrane. This chain is Syncytin-2 (ERVFRD-1), found in Macaca fascicularis (Crab-eating macaque).